Consider the following 317-residue polypeptide: Putative 2-hydroxyacid dehydrogenase SAR2389 (317 aa).

NAD(+) contacts are provided by residues E155 to I156, A234 to R236, and D260. The active site involves R236. The active site involves E265. The Proton donor role is filled by H283. H283–N286 is a binding site for NAD(+).

It belongs to the D-isomer specific 2-hydroxyacid dehydrogenase family.

This Staphylococcus aureus (strain MRSA252) protein is Putative 2-hydroxyacid dehydrogenase SAR2389.